The primary structure comprises 365 residues: Peptide chain release factor 2 (365 aa).

An N5-methylglutamine modification is found at Q252.

It belongs to the prokaryotic/mitochondrial release factor family. In terms of processing, methylated by PrmC. Methylation increases the termination efficiency of RF2.

The protein resides in the cytoplasm. In terms of biological role, peptide chain release factor 2 directs the termination of translation in response to the peptide chain termination codons UGA and UAA. The polypeptide is Peptide chain release factor 2 (Escherichia coli (strain K12 / MC4100 / BW2952)).